The primary structure comprises 715 residues: Fatty acid oxidation complex subunit alpha (715 aa).

An enoyl-CoA hydratase/isomerase region spans residues 1–190 (MIYEGKAITV…KVGAVDAVVA (190 aa)). Residue D297 coordinates substrate. The segment at 312-715 (HDVKQAAVLG…MAKNGQRFFN (404 aa)) is 3-hydroxyacyl-CoA dehydrogenase. NAD(+)-binding positions include M325, D344, 401 to 403 (VVE), K408, and S430. H451 serves as the catalytic For 3-hydroxyacyl-CoA dehydrogenase activity. N454 contributes to the NAD(+) binding site. Positions 501 and 660 each coordinate substrate.

The protein in the N-terminal section; belongs to the enoyl-CoA hydratase/isomerase family. It in the C-terminal section; belongs to the 3-hydroxyacyl-CoA dehydrogenase family. In terms of assembly, heterotetramer of two alpha chains (FadB) and two beta chains (FadA).

The catalysed reaction is a (3S)-3-hydroxyacyl-CoA + NAD(+) = a 3-oxoacyl-CoA + NADH + H(+). It catalyses the reaction a (3S)-3-hydroxyacyl-CoA = a (2E)-enoyl-CoA + H2O. It carries out the reaction a 4-saturated-(3S)-3-hydroxyacyl-CoA = a (3E)-enoyl-CoA + H2O. The enzyme catalyses (3S)-3-hydroxybutanoyl-CoA = (3R)-3-hydroxybutanoyl-CoA. The catalysed reaction is a (3Z)-enoyl-CoA = a 4-saturated (2E)-enoyl-CoA. It catalyses the reaction a (3E)-enoyl-CoA = a 4-saturated (2E)-enoyl-CoA. It participates in lipid metabolism; fatty acid beta-oxidation. In terms of biological role, involved in the aerobic and anaerobic degradation of long-chain fatty acids via beta-oxidation cycle. Catalyzes the formation of 3-oxoacyl-CoA from enoyl-CoA via L-3-hydroxyacyl-CoA. It can also use D-3-hydroxyacyl-CoA and cis-3-enoyl-CoA as substrate. This Pseudomonas entomophila (strain L48) protein is Fatty acid oxidation complex subunit alpha.